A 1318-amino-acid chain; its full sequence is MMSAGGTYISTASVEVPQALQDGEKFIRWDDDSGTGTPVTMRVDAKGFFLYWVDQNNELDILDIATIRDVRTGQYAKRPKDNKLRQIVTLGPQDTLEEKTVTVCHGSDFVNMTFVNFCCTRRDIAQLWTDGLIKLAYSLAQLNGSAIMFLQKAHTKLCLQVDKSGRIPVKNIIKLFAQNKEDRKRVEKALDVTGLPSGKVDSISVSKFQFEDFYNLYKYLTQRSEVERLFDSIVGNSKRKCMSIAQLVEFLNKTQRDPRLNEILYPYANPARAKELIQQYEPNKFNAQKGQLSLDGFLRYLMGDDNPIMAPSKLDLCDDMDQPMSHYFINSSHNTYLTGHQLTGKSSVEIYRQCLLAGCRCVELDFWNGRTEEPVIVHGYTFVPEIFAKDVLEAIAESAFKTSEYPVILSFENHCNPRQQAKIANYCREIFGDMLLDKPLDSHPLEPNMDLPPPAMLRRKIIIKNKKKHHHHHHHHHHKKPAQVGTPAANNKLTTANSVDAKAAQQVGLSASHEDGGVTRSTANGDVATGTGTGSAAGTAGHAPPLQQIRQSSKDSTGSSDSDSSSEDESLPNTTPNLPSGNEPPPEKAQKETEAGAEISALVNYVQPIHFSSFENAEKKNRCYEMSSFDEKQATTLLKERPIEFVNYNKHQLSRVYPAGTRFDSSNFMPQLFWNAGCQLVALNFQTLDLAMQLNLGIFEYNARSGYLLKPEFMRRSDRRLDPFAESTVDGIIAGTVSITVLSGQFLTDKRANTFVEVDMYGLPADTVRKKFRTKTVRDNGMNPLYDEEPFVFKKVVLPELASIRIAAYEEGGKLIGHRVLPVIGLCPGYRHVNLRSEVGQPIALASLFLCVVVKDYVPDDLSNFAEALANPIKYQSELEKRDIQLSVLTDEAEALGSADEDLSKSFVFVQVGGQKKELRPVESLATSPKHRPSISAAAAMSVDVTVDRTDGGRGEDSISIVAPSIQHQHSLDQSVSTSIRQVESSQFDVDLVLAEPLEKILDHKSVKEKRLEMEKKLESLRKKHDKEKIKIAGQKSSPLEGKKPKFAITNKLVKRLSNKSLNCLSPHSEPGVEIPACPLDLGDSSEESAAADAGEDLAGGSSSLDGRTQESRLRSACREYTSQYRELQEKYHEAIYSAAEKVLKTSQTGQTKQLKASLDKVTGEVMHQLQEARRNEVKNLATVHRDRDELIRMKREVASSVVERGVAERVRLKQTFDRRTDELQKQHDSVRNALAEHRSKARQILDKEAESRSCVSSNGFLVLFHGPHHHGCTGSGSSALSGNNLTLNLDAGAAGSHSAISPAKSHNSIAAAAEMKT.

Positions aspartate 318–lysine 466 constitute a PI-PLC X-box domain. Residues histidine 333 and histidine 378 contribute to the active site. Residues lysine 464 and lysine 466 each coordinate substrate. Residues lysine 466 to proline 481 show a composition bias toward basic residues. 2 disordered regions span residues lysine 466–alanine 489 and glutamine 505–glutamate 594. Low complexity-rich tracts occupy residues alanine 528 to alanine 543 and lysine 554 to aspartate 563. The segment covering leucine 571–serine 580 has biased composition (polar residues). Basic and acidic residues predominate over residues proline 585–glutamate 594. One can recognise a PI-PLC Y-box domain in the interval isoleucine 599–arginine 715. Substrate is bound by residues serine 628 and arginine 655. The C2 domain occupies arginine 715–isoleucine 843. Disordered regions lie at residues leucine 1080–serine 1112 and glycine 1296–threonine 1318. The segment covering glutamate 1088–glycine 1107 has biased composition (low complexity).

As to expression, expressed in neuronal cell bodies of the optic lobe, central brain, and thoracic ganglia in adults, and the brain of larvae.

The catalysed reaction is a 1,2-diacyl-sn-glycero-3-phospho-(1D-myo-inositol-4,5-bisphosphate) + H2O = 1D-myo-inositol 1,4,5-trisphosphate + a 1,2-diacyl-sn-glycerol + H(+). Its function is as follows. The production of the second messenger molecules diacylglycerol (DAG) and inositol 1,4,5-trisphosphate (IP3) is mediated by activated phosphatidylinositol-specific phospholipase C enzymes. The protein is 1-phosphatidylinositol 4,5-bisphosphate phosphodiesterase classes I and II (Plc21C) of Drosophila melanogaster (Fruit fly).